The following is a 713-amino-acid chain: MLNFFAAAPKGFEYSLAQELTEFGATEIKESVAGVYFTAPLALAYRITLWTRLASRIVLVIYKGPCESAEQLYNAAYCIDWSAHFSNRNTFSIDFHGTGGFINNTQFGALKIKDAIVDRFRDDGDARPNVARIDADIKIDAHFRNGVITIAMNFSGPSLHQRGYRSTTGEAPLKENLAANMLVRSGWKAAPTTLLDPFCGSGTVLIEAALMAADIAPGLQRSRFGFEHWRRHDKATWHEILEEAKARASLGVKRCDVKFYGSDIDSRLVALAKRNAQNAGVLELIDFKVANALNVEPPAGEGYLITNPPYGERLGSVSELLQLYYQLGDKFKKEFGGWKVAMLCSDIELISALKLKADKQMKMFNGALECAFNLYTLHAQSTRRDTPVLPEGVDIADIAPAFANRIKKNAKQLEKWAKKEGIDSYRLYDADIPEYNVAVDRYLDHIVVQEYMAPASIPEAVTKRRLSDVLLALPAAIGVDPHKITMKTRERQKGTNQYQKLDERKLELITTEYGAKFKLNLTGYLDTGLFLDHRLTRRLVGQKSKGRRVLNLFSYTGSASVHAALGGAKSVTTVDMSNTYLAWAKENFALNDLSGKQYEFVQADCLQWIRDSALDKSAQYDLIFIDPPTFSNSKRMEDSFDVQRDHVNLLGMLIKLLSPNGEIVFSNNKRKFKMDTETLAKMKIKVENIDDLTLPMDYKRNPHIHNTWLITHA.

In terms of domain architecture, THUMP spans 43–154 (LAYRITLWTR…NGVITIAMNF (112 aa)).

It belongs to the methyltransferase superfamily. RlmKL family.

The protein localises to the cytoplasm. The catalysed reaction is guanosine(2445) in 23S rRNA + S-adenosyl-L-methionine = N(2)-methylguanosine(2445) in 23S rRNA + S-adenosyl-L-homocysteine + H(+). It carries out the reaction guanosine(2069) in 23S rRNA + S-adenosyl-L-methionine = N(2)-methylguanosine(2069) in 23S rRNA + S-adenosyl-L-homocysteine + H(+). Functionally, specifically methylates the guanine in position 2445 (m2G2445) and the guanine in position 2069 (m7G2069) of 23S rRNA. This is Ribosomal RNA large subunit methyltransferase K/L from Shewanella sp. (strain MR-7).